A 250-amino-acid chain; its full sequence is 2-C-methyl-D-erythritol 4-phosphate cytidylyltransferase (250 aa).

It belongs to the IspD/TarI cytidylyltransferase family. IspD subfamily.

It catalyses the reaction 2-C-methyl-D-erythritol 4-phosphate + CTP + H(+) = 4-CDP-2-C-methyl-D-erythritol + diphosphate. Its pathway is isoprenoid biosynthesis; isopentenyl diphosphate biosynthesis via DXP pathway; isopentenyl diphosphate from 1-deoxy-D-xylulose 5-phosphate: step 2/6. Catalyzes the formation of 4-diphosphocytidyl-2-C-methyl-D-erythritol from CTP and 2-C-methyl-D-erythritol 4-phosphate (MEP). This is 2-C-methyl-D-erythritol 4-phosphate cytidylyltransferase from Streptomyces avermitilis (strain ATCC 31267 / DSM 46492 / JCM 5070 / NBRC 14893 / NCIMB 12804 / NRRL 8165 / MA-4680).